The sequence spans 216 residues: Pyridoxine/pyridoxamine 5'-phosphate oxidase (216 aa).

Substrate contacts are provided by residues 12–15 and Lys70; that span reads RKSY. FMN-binding positions include 65–70, 80–81, Arg86, and Lys87; these read RVVLVK and FT. Substrate is bound by residues Tyr127, Arg131, and Ser135. FMN is bound by residues 144–145 and Trp188; that span reads QS. 194 to 196 serves as a coordination point for substrate; it reads RLH. Residue Arg198 coordinates FMN.

The protein belongs to the pyridoxamine 5'-phosphate oxidase family. Homodimer. FMN is required as a cofactor.

It carries out the reaction pyridoxamine 5'-phosphate + O2 + H2O = pyridoxal 5'-phosphate + H2O2 + NH4(+). The catalysed reaction is pyridoxine 5'-phosphate + O2 = pyridoxal 5'-phosphate + H2O2. It functions in the pathway cofactor metabolism; pyridoxal 5'-phosphate salvage; pyridoxal 5'-phosphate from pyridoxamine 5'-phosphate: step 1/1. The protein operates within cofactor metabolism; pyridoxal 5'-phosphate salvage; pyridoxal 5'-phosphate from pyridoxine 5'-phosphate: step 1/1. In terms of biological role, catalyzes the oxidation of either pyridoxine 5'-phosphate (PNP) or pyridoxamine 5'-phosphate (PMP) into pyridoxal 5'-phosphate (PLP). This chain is Pyridoxine/pyridoxamine 5'-phosphate oxidase, found in Polaromonas sp. (strain JS666 / ATCC BAA-500).